The sequence spans 316 residues: Bifunctional peptidase and (3S)-lysyl hydroxylase Jmjd7 (316 aa).

One can recognise a JmjC domain in the interval 128–307 (VQKQCSNLPT…LKYSYFQLMD (180 aa)). Residues H178, D180, and H277 each coordinate Fe cation.

As to quaternary structure, homodimer; disulfide-linked. Interacts with DRG1 and DRG2. Requires Fe(2+) as cofactor.

It localises to the nucleus. The protein resides in the cytoplasm. The catalysed reaction is L-lysyl-[protein] + 2-oxoglutarate + O2 = (3S)-3-hydroxy-L-lysyl-[protein] + succinate + CO2. Functionally, bifunctional enzyme that acts both as an endopeptidase and 2-oxoglutarate-dependent monooxygenase. Endopeptidase that cleaves histones N-terminal tails at the carboxyl side of methylated arginine or lysine residues, to generate 'tailless nucleosomes', which may trigger transcription elongation. Preferentially recognizes and cleaves monomethylated and dimethylated arginine residues of histones H2, H3 and H4. After initial cleavage, continues to digest histones tails via its aminopeptidase activity. Additionally, may play a role in protein biosynthesis by modifying the translation machinery. Acts as a Fe(2+) and 2-oxoglutarate-dependent monooxygenase, catalyzing (S)-stereospecific hydroxylation at C-3 of 'Lys-22' of DRG1 and 'Lys-21' of DRG2 translation factors (TRAFAC), promoting their interaction with ribonucleic acids (RNA). The sequence is that of Bifunctional peptidase and (3S)-lysyl hydroxylase Jmjd7 from Mus musculus (Mouse).